Here is a 371-residue protein sequence, read N- to C-terminus: 4-hydroxy-3-methylbut-2-en-1-yl diphosphate synthase (flavodoxin) (371 aa).

[4Fe-4S] cluster-binding residues include Cys-270, Cys-273, Cys-305, and Glu-312.

The protein belongs to the IspG family. [4Fe-4S] cluster serves as cofactor.

It carries out the reaction (2E)-4-hydroxy-3-methylbut-2-enyl diphosphate + oxidized [flavodoxin] + H2O + 2 H(+) = 2-C-methyl-D-erythritol 2,4-cyclic diphosphate + reduced [flavodoxin]. It participates in isoprenoid biosynthesis; isopentenyl diphosphate biosynthesis via DXP pathway; isopentenyl diphosphate from 1-deoxy-D-xylulose 5-phosphate: step 5/6. Converts 2C-methyl-D-erythritol 2,4-cyclodiphosphate (ME-2,4cPP) into 1-hydroxy-2-methyl-2-(E)-butenyl 4-diphosphate. The polypeptide is 4-hydroxy-3-methylbut-2-en-1-yl diphosphate synthase (flavodoxin) (Shewanella frigidimarina (strain NCIMB 400)).